We begin with the raw amino-acid sequence, 392 residues long: Galactokinase (392 aa).

Residues R37, E43, H44, and D46 each contribute to the alpha-D-galactose site. ATP is bound by residues G136, G138, S140, and S141. An alpha-D-galactose-binding site is contributed by D186. The active-site Proton acceptor is the D186. The residue at position 230 (S230) is a Phosphoserine. An alpha-D-galactose-binding site is contributed by Y236.

The protein belongs to the GHMP kinase family. GalK subfamily. In terms of assembly, homodimer.

The enzyme catalyses alpha-D-galactose + ATP = alpha-D-galactose 1-phosphate + ADP + H(+). It functions in the pathway carbohydrate metabolism; galactose metabolism. Catalyzes the transfer of a phosphate from ATP to alpha-D-galactose and participates in the first committed step in the catabolism of galactose. This Canis lupus familiaris (Dog) protein is Galactokinase (GALK1).